Consider the following 1133-residue polypeptide: Envelopment polyprotein (1133 aa).

A signal peptide spans 1–17 (MWSLLLLAALVGQGFAL). At 18–484 (KNVFDMRIQC…PGFHGWATAA (467 aa)) the chain is on the lumenal side. Cystine bridges form between C27/C149, C61/C155, C107/C126, C131/C136, C173/C183, C208/C245, C232/C349, C374/C433, C378/C387, C403/C422, and C450/C473. N-linked (GlcNAc...) asparagine; by host glycosylation occurs at N132. 2 N-linked (GlcNAc...) asparagine; by host glycosylation sites follow: N233 and N345. A glycan (N-linked (GlcNAc...) asparagine; by host) is linked at N397. The chain crosses the membrane as a helical span at residues 485–504 (LLITFCFGWVLIPACTLAIL). Over 505-626 (LVLKFFANIL…NLFRYKSRCY (122 aa)) the chain is Cytoplasmic. Positions 514–531 (LHTSNQENRFKAILRKIK) are binding to the ribonucleoprotein. CCHC-type zinc fingers lie at residues 543–563 (CEIC…NLSC) and 568–589 (CPYC…YKVC). Binding to the ribonucleoprotein stretches follow at residues 586 to 603 (YKVC…KKTV), 590 to 601 (QATHRFREDLKK), and 609 to 623 (GPGC…RYKS). An ITAM domain is found at 609–632 (GPGCYRTLNLFRYKSRCYILTMWT). The YxxL signature appears at 613 to 616 (YRTL). The helical transmembrane segment at 627-647 (ILTMWTLLLIIESILWAASAA) threads the bilayer. Residues 648 to 1104 (EIPLVPLWTD…WVMGIINGNW (457 aa)) lie on the Lumenal side of the membrane. 8 disulfide bridges follow: C733-C768, C737-C775, C749-C883, C763-C894, C778-C902, C804-C813, C821-C830, and C861-C865. The segment at 755–775 (YEYENSWACNPPDCPGVGTGC) is fusion loop. The N-linked (GlcNAc...) asparagine; by host glycan is linked to N926. 5 disulfide bridges follow: C968-C998, C991-C1043, C1008-C1013, C1044-C1049, and C1083-C1087. The chain crosses the membrane as a helical span at residues 1105-1125 (VVLIVLCVLLLFSLILLSILC). The interval 1120–1133 (LLSILCPVRKHKKS) is binding to the ribonucleoprotein. Topologically, residues 1126–1133 (PVRKHKKS) are cytoplasmic.

The protein belongs to the hantavirus envelope glycoprotein family. Homodimer. Homotetramer; forms heterotetrameric Gn-Gc spikes in the pre-fusion conformation. Interacts (via C-terminus) with the nucleoprotein. Interacts with host TUFM; this interaction contributes to the virus-induced degradation of mitochondria by autophagy, which leads to degradation of host MAVS and inhibition of type I interferon (IFN) responses. Interacts with host MAP1LC3B; this interaction contributes to the virus-induced degradation of mitochondria by autophagy, which leads to degradation of host MAVS and inhibition of type I interferon (IFN) responses. As to quaternary structure, homodimer. Homotetramer; forms heterotetrameric Gn-Gc spikes in the pre-fusion conformation. Homotrimer; forms homotrimer in the post-fusion conformation at acidic pH. Interacts (via C-terminus) with the nucleoprotein. In terms of processing, envelope polyprotein precursor is quickly cleaved in vivo just after synthesis, presumably by host signal peptidase.

It localises to the virion membrane. Its subcellular location is the host cell surface. The protein resides in the host Golgi apparatus membrane. The protein localises to the host endoplasmic reticulum membrane. It is found in the host mitochondrion. In terms of biological role, forms homotetramers with glycoprotein C at the surface of the virion. Attaches the virion to host cell receptors including integrin ITGAV/ITGB3. This attachment induces virion internalization predominantly through clathrin-dependent endocytosis. Mediates the assembly and budding of infectious virus particles through its interaction with the nucleocapsid protein and the viral genome. May dysregulate normal immune and endothelial cell responses through an ITAM motif. Translocates to mitochondria, binds to host TUFM and recruits MAP1LC3B. These interactions induce mitochondrial autophagy and therefore destruction of host MAVS leading to inhibition of type I interferon (IFN) responses. Concomitant breakdown of glycoprotein N is apparently prevented by the nucleoprotein that may inhibit Gn-stimulated autophagosome-lysosome fusion. Interacts with the viral genomic RNA. Forms homotetramers with glycoprotein N at the surface of the virion. Attaches the virion to host cell receptors including integrin ITGAV/ITGB3. This attachment induces virion internalization predominantly through clathrin-dependent endocytosis. Class II fusion protein that promotes fusion of viral membrane with host endosomal membrane after endocytosis of the virion. This chain is Envelopment polyprotein (GP), found in Homo sapiens (Human).